The following is a 498-amino-acid chain: Peptidase inhibitor 16 (498 aa).

A signal peptide spans 1–29; the sequence is MHGSCSPWVMLPPPLLLLLLLIATGPTTA. The SCP domain maps to 39-167; sequence VDLHNQYRAQ…ANIHLLVCNY (129 aa). The N-linked (GlcNAc...) asparagine glycan is linked to asparagine 116. 3 disordered regions span residues 204–277, 317–407, and 419–467; these read NPEK…GPSS, PKSM…SPLS, and ERGG…ENPE. 2 stretches are compositionally biased toward polar residues: residues 218-277 and 344-353; these read VPST…GPSS and LTESGESVPQ. Low complexity predominate over residues 367 to 380; it reads PEAILPEAEAAPTE. Residues 383–397 show a composition bias toward basic and acidic residues; it reads VELREPEAESPKAES. Positions 437 to 447 are enriched in polar residues; sequence SLPTFPSASGN. Asparagine 447 carries an N-linked (GlcNAc...) asparagine glycan.

This sequence belongs to the CRISP family. Interacts with PSP94/MSMB. N-glycosylated. In terms of tissue distribution, expressed strongly in aorta and skin, and weakly in adipose tissue (at protein level). In heart, found in the extracellular space surrounding cardiomyocytes (at protein level).

The protein localises to the secreted. Functionally, may inhibit cardiomyocyte growth. The sequence is that of Peptidase inhibitor 16 (Pi16) from Mus musculus (Mouse).